The sequence spans 90 residues: uncharacterized protein (90 aa).

The protein localises to the mitochondrion. This is an uncharacterized protein from Ascobolus immersus.